Reading from the N-terminus, the 382-residue chain is Transcription termination/antitermination protein NusA (382 aa).

Residues 135–199 enclose the S1 motif domain; the sequence is EDIMTGIVQR…KGPQIMISRT (65 aa). Positions 301–367 constitute a KH domain; sequence EKTTQVIVPD…TLALDQETAD (67 aa). The tract at residues 348-382 is disordered; the sequence is LLEDEAASHETLALDQETADQPEATVETSKNHEEE.

This sequence belongs to the NusA family. As to quaternary structure, monomer. Binds directly to the core enzyme of the DNA-dependent RNA polymerase and to nascent RNA.

It localises to the cytoplasm. Functionally, participates in both transcription termination and antitermination. The chain is Transcription termination/antitermination protein NusA from Halalkalibacterium halodurans (strain ATCC BAA-125 / DSM 18197 / FERM 7344 / JCM 9153 / C-125) (Bacillus halodurans).